The sequence spans 146 residues: Large ribosomal subunit protein uL15 (146 aa).

The interval 1–46 (MKLHELQPAPGSRKKAVRVGRGIGSGNGKTAGRGHKGQKARSGGGV) is disordered. Residues 21–31 (RGIGSGNGKTA) are compositionally biased toward gly residues.

This sequence belongs to the universal ribosomal protein uL15 family. In terms of assembly, part of the 50S ribosomal subunit.

In terms of biological role, binds to the 23S rRNA. This is Large ribosomal subunit protein uL15 from Geobacillus thermodenitrificans (strain NG80-2).